Here is a 72-residue protein sequence, read N- to C-terminus: Gas vesicle protein A (72 aa).

This sequence belongs to the gas vesicle GvpA family. As to quaternary structure, the gas vesicle shell is 2 nm thick and consists of a single layer of this protein. It forms helical ribs nearly perpendicular to the long axis of the vesicle.

The protein resides in the gas vesicle shell. Its function is as follows. Gas vesicles are hollow, gas filled proteinaceous nanostructures found in some microorganisms. During planktonic growth they allow positioning of the organism at a favorable depth for light or nutrient acquisition. GvpA forms the protein shell. This chain is Gas vesicle protein A, found in Planktothrix agardhii (Oscillatoria agardhii).